The following is a 212-amino-acid chain: FMN-dependent NADH:quinone oxidoreductase (212 aa).

FMN-binding positions include serine 10 and 17 to 19 (SFS).

The protein belongs to the azoreductase type 1 family. In terms of assembly, homodimer. The cofactor is FMN.

It catalyses the reaction 2 a quinone + NADH + H(+) = 2 a 1,4-benzosemiquinone + NAD(+). The catalysed reaction is N,N-dimethyl-1,4-phenylenediamine + anthranilate + 2 NAD(+) = 2-(4-dimethylaminophenyl)diazenylbenzoate + 2 NADH + 2 H(+). In terms of biological role, quinone reductase that provides resistance to thiol-specific stress caused by electrophilic quinones. Functionally, also exhibits azoreductase activity. Catalyzes the reductive cleavage of the azo bond in aromatic azo compounds to the corresponding amines. This chain is FMN-dependent NADH:quinone oxidoreductase, found in Malacoplasma penetrans (strain HF-2) (Mycoplasma penetrans).